Consider the following 165-residue polypeptide: MRDFTHFNEQGRAKMVDISEKSITERTAVAKSSVEVNKEIYEKIIGGKIRKGDVLAVAQIAGVMAAKNTSQWIPMCHPLSLTGVDISFEWEETRNHYLLHIEASVKTTGRTGVEMEALTAASATALTVYDMCKAIDKGMVIGPTYLVKKTGGVHGDFERSSSQKS.

Substrate-binding positions include 75 to 77 and 115 to 116; these read MCH and ME. Asp-130 is a catalytic residue.

The protein belongs to the MoaC family. Homohexamer; trimer of dimers.

The catalysed reaction is (8S)-3',8-cyclo-7,8-dihydroguanosine 5'-triphosphate = cyclic pyranopterin phosphate + diphosphate. It participates in cofactor biosynthesis; molybdopterin biosynthesis. Catalyzes the conversion of (8S)-3',8-cyclo-7,8-dihydroguanosine 5'-triphosphate to cyclic pyranopterin monophosphate (cPMP). The sequence is that of Cyclic pyranopterin monophosphate synthase from Halalkalibacterium halodurans (strain ATCC BAA-125 / DSM 18197 / FERM 7344 / JCM 9153 / C-125) (Bacillus halodurans).